Reading from the N-terminus, the 526-residue chain is Outer capsid protein VP5 (526 aa).

The segment at 1–42 is involved in membrane permeabilization; it reads MGKIIKSLSRFGKKVGNALTSNTAKKIYSTIGKAAERFAESE.

The protein belongs to the orbivirus VP5 family.

The protein resides in the virion. VP5 protein is one of the two proteins (with VP2) which constitute the virus particle outer capsid. Acts as a membrane permeabilization protein that mediates release of viral particles from endosomal compartments into the cytoplasm. Permeabilization activity is probably negatively regulated by VP2 and is triggered by endosomal degradation of VP2 and exposure to low pH. This is Outer capsid protein VP5 (Segment-6) from Bluetongue virus 11 (isolate USA) (BTV 11).